The following is a 661-amino-acid chain: ATP-dependent RNA helicase vasa (661 aa).

Acidic residues predominate over residues 1 to 10 (MSDDWDDEPI). Residues 1-186 (MSDDWDDEPI…RRRRNEDDIN (186 aa)) are disordered. Position 22 is a phosphoserine (Ser-22). Thr-27 carries the post-translational modification Phosphothreonine. Composition is skewed to gly residues over residues 38–52 (DGVG…GYQG) and 60–83 (RIGG…GGFH). A compositionally biased stretch (basic and acidic residues) spans 85–95 (GRREGERDFRG). Tandem repeats lie at residues 93-99 (FRGGEGG), 100-106 (FRGGQGG), 107-113 (SRGGQGG), 114-120 (SRGGQGG), and 121-127 (FRGGEGG). The 5 X 7 AA tandem repeats of [FS]-R-G-G-[EQ]-G-G stretch occupies residues 93–127 (FRGGEGGFRGGQGGSRGGQGGSRGGQGGFRGGEGG). A compositionally biased stretch (gly residues) spans 96 to 129 (GEGGFRGGQGGSRGGQGGSRGGQGGFRGGEGGFR). Residues 131-172 (RLYENEDGDERRGRLDREERGGERRGRLDREERGGERGERGD) show a composition bias toward basic and acidic residues. A B30.2/SPRY domain-binding motif motif is present at residues 184–188 (DINNN). Positions 184-203 (DINNNNNIVEDVERKREFYI) are required for posterior localization in oocyte. The short motif at 245–273 (QHFTSADLRDIIIDNVNKSGYKIPTPIQK) is the Q motif element. One can recognise a Helicase ATP-binding domain in the interval 276 to 453 (IPVISSGRDL…GEFLKNYVFV (178 aa)). 289–296 (AQTGSGKT) lines the ATP pocket. The DEAD box motif lies at 399–402 (DEAD). The 148-residue stretch at 477–624 (KRSKLIEILS…TVPDFLRTCG (148 aa)) folds into the Helicase C-terminal domain.

It belongs to the DEAD box helicase family. DDX4/VASA subfamily. Interacts with eIF5B and faf. Interacts with gus (via B30.2/SPRY domain) and Fsn (via B30.2/SPRY domain). Interacts with aub, me31B, eIF-4a and TER94. Interacts with piwi; this interaction is RNA independent. Interacts with Dcr-1 and Fmr1; these interactions occur in the polar granules. Requires Mg(2+) as cofactor. In terms of processing, ubiquitinated during oogenesis. Deubiquitinated by faf, which protects this protein from proteasome-mediated degradation. As to expression, abundantly expressed in the female germline. Gus and faf are required for vas expression in the posterior pole of the oocyte.

Its subcellular location is the cytoplasm. The protein resides in the perinuclear region. It localises to the cytoplasmic ribonucleoprotein granule. The enzyme catalyses ATP + H2O = ADP + phosphate + H(+). In terms of biological role, involved in translational control mechanisms operating in early stages of oogenesis. Required maternally in many stages of oogenesis, including cystocyte differentiation, oocyte differentiation, and specification of anterior-posterior polarity in the developing cysts. Essential for the formation and/or structural integrity of perinuclear nuage particles during germ cell formation. Required for gus, Fsn and aub accumulation at the posterior pole of the embryo. Required for the localization of vas to the perinuclear region of nurse cells. May have a role in production of piwi-interacting RNA (piRNA). The chain is ATP-dependent RNA helicase vasa from Drosophila melanogaster (Fruit fly).